Reading from the N-terminus, the 126-residue chain is Large ribosomal subunit protein bL12 (126 aa).

This sequence belongs to the bacterial ribosomal protein bL12 family. Homodimer. Part of the ribosomal stalk of the 50S ribosomal subunit. Forms a multimeric L10(L12)X complex, where L10 forms an elongated spine to which 2 to 4 L12 dimers bind in a sequential fashion. Binds GTP-bound translation factors.

Its function is as follows. Forms part of the ribosomal stalk which helps the ribosome interact with GTP-bound translation factors. Is thus essential for accurate translation. The chain is Large ribosomal subunit protein bL12 from Acidobacterium capsulatum (strain ATCC 51196 / DSM 11244 / BCRC 80197 / JCM 7670 / NBRC 15755 / NCIMB 13165 / 161).